We begin with the raw amino-acid sequence, 323 residues long: MSLYPEIEPYDHGMLDVGDGNHVYWETCGNPHGKPAVVLHGGPGSRASPGLRRYFDPAAYRIVLLDQRGAGRSLPRASAPDTDMSVNTTAHLMADLERLRVHLGIERWLVWGVSWGSVLGLRYAQTHPGVVTELVLTGVATGSNAEVALLTRGLGNIFPEAHERFLAELPPDARDGNLPAAYNRLLESPDPAVRERAARAWTDWETATIPAPPGSVARYQDPDFRMGFARTVTHYWGNDHFLGDGNDEGVVIRDAHLLKGIPGTLVQGSLDFGNLLGIVWRLHHAWPDSDLVIVDEAGHDAGTTGDEALLAATDKYARGGTAE.

The AB hydrolase-1 domain occupies 37-301; that stretch reads VVLHGGPGSR…VIVDEAGHDA (265 aa). S114 acts as the Nucleophile in catalysis. The active site involves D271. H299 serves as the catalytic Proton donor.

It belongs to the peptidase S33 family.

Its subcellular location is the cytoplasm. The catalysed reaction is Release of N-terminal proline from a peptide.. Functionally, specifically catalyzes the removal of N-terminal proline residues from peptides. This Streptomyces coelicolor (strain ATCC BAA-471 / A3(2) / M145) protein is Probable proline iminopeptidase.